We begin with the raw amino-acid sequence, 128 residues long: Large ribosomal subunit protein bL17 (128 aa).

It belongs to the bacterial ribosomal protein bL17 family. As to quaternary structure, part of the 50S ribosomal subunit. Contacts protein L32.

This Hydrogenovibrio crunogenus (strain DSM 25203 / XCL-2) (Thiomicrospira crunogena) protein is Large ribosomal subunit protein bL17.